The sequence spans 214 residues: uncharacterized protein (214 aa).

Helical transmembrane passes span 23 to 43 (ILVG…VAAA) and 65 to 85 (VLYA…PVLL). The segment at 96 to 115 (ATRPTGASVRGGRSIGSGHP) is disordered. 2 helical membrane-spanning segments follow: residues 152-172 (VVLT…TYLM) and 181-201 (WISY…EWLY).

It is found in the cell membrane. This is an uncharacterized protein from Mycobacterium tuberculosis (strain CDC 1551 / Oshkosh).